The chain runs to 290 residues: Ventral anterior homeobox 2 (290 aa).

The span at 1–17 shows a compositional bias: basic and acidic residues; that stretch reads MGDGGAERDRGPARRAE. The disordered stretch occupies residues 1-75; it reads MGDGGAERDR…GQPGPGEADH (75 aa). Positions 102–161 form a DNA-binding region, homeobox; that stretch reads PKRTRTSFTAEQLYRLEMEFQRCQYVVGRERTELARQLNLSETQVKVWFQNRRTKQKKDQ. The disordered stretch occupies residues 205-240; the sequence is PSLPGLPASHRGTSLGDPRNSSPRLNPLSSASASPP. Residues 222–238 are compositionally biased toward low complexity; that stretch reads PRNSSPRLNPLSSASAS.

It belongs to the EMX homeobox family.

It localises to the nucleus. Transcription factor that may function in dorsoventral specification of the forebrain. Regulates the expression of Wnt signaling antagonists including the expression of a truncated TCF7L2 isoform that cannot bind CTNNB1 and acts therefore as a potent dominant-negative Wnt antagonist. Plays a crucial role in eye development and, in particular, in the specification of the ventral optic vesicle. May be a regulator of axial polarization in the retina. This is Ventral anterior homeobox 2 (VAX2) from Homo sapiens (Human).